A 97-amino-acid polypeptide reads, in one-letter code: YcgL domain-containing protein APP7_0754 (97 aa).

Positions 6–90 constitute a YcgL domain; the sequence is NLCAIYKSPK…PPENLLKTFL (85 aa).

The sequence is that of YcgL domain-containing protein APP7_0754 from Actinobacillus pleuropneumoniae serotype 7 (strain AP76).